Consider the following 601-residue polypeptide: Urocanate hydratase (601 aa).

NAD(+) contacts are provided by residues 63–64 and Q141; that span reads GG. The segment at 172 to 201 is insert; sequence SDRPSALLKQGLSPEGTAPGSGRSSAQVPG. The interval 179–200 is disordered; the sequence is LKQGLSPEGTAPGSGRSSAQVP. Residues 216-218, E236, 282-283, 307-311, 317-318, and Y368 each bind NAD(+); these read GMG, NA, QTSAH, and YL. C456 is a catalytic residue. G538 provides a ligand contact to NAD(+).

This sequence belongs to the urocanase family. NAD(+) is required as a cofactor.

It localises to the cytoplasm. The enzyme catalyses 4-imidazolone-5-propanoate = trans-urocanate + H2O. It functions in the pathway amino-acid degradation; L-histidine degradation into L-glutamate; N-formimidoyl-L-glutamate from L-histidine: step 2/3. Functionally, catalyzes the conversion of urocanate to 4-imidazolone-5-propionate. The polypeptide is Urocanate hydratase (Ralstonia nicotianae (strain ATCC BAA-1114 / GMI1000) (Ralstonia solanacearum)).